The primary structure comprises 404 residues: Glycosylated lysosomal membrane protein B (404 aa).

The signal sequence occupies residues M1–G24. Over Q25–S364 the chain is Lumenal. 15 N-linked (GlcNAc...) asparagine glycosylation sites follow: N85, N124, N128, N142, N152, N156, N163, N168, N178, N189, N205, N221, N266, N303, and N330. A helical transmembrane segment spans residues I365–G385. Residues T386–N404 are Cytoplasmic-facing. Positions Y400–N404 match the Lysosomal targeting motif motif.

The protein belongs to the GLMP family. In terms of assembly, interacts (via lumenal domain) with lysosomal protein MFSD1; the interaction starts while both proteins are still in the endoplasmic reticulum and is required for stabilization of MFSD1 in lysosomes but has no direct effect on its targeting to lysosomes or transporter activity.

The protein localises to the lysosome membrane. Its function is as follows. Required to protect lysosomal transporter MFSD1 from lysosomal proteolysis and for MFSD1 lysosomal localization. The polypeptide is Glycosylated lysosomal membrane protein B (glmp-b) (Xenopus laevis (African clawed frog)).